The following is a 474-amino-acid chain: Kynureninase 2 (474 aa).

Pyridoxal 5'-phosphate-binding positions include leucine 144, threonine 145, 172–175, aspartate 258, histidine 261, and tyrosine 283; that span reads FPSD. Lysine 284 carries the post-translational modification N6-(pyridoxal phosphate)lysine. The pyridoxal 5'-phosphate site is built by tryptophan 323 and threonine 351.

It belongs to the kynureninase family. Homodimer. Pyridoxal 5'-phosphate serves as cofactor.

The protein resides in the cytoplasm. The enzyme catalyses L-kynurenine + H2O = anthranilate + L-alanine + H(+). It catalyses the reaction 3-hydroxy-L-kynurenine + H2O = 3-hydroxyanthranilate + L-alanine + H(+). It functions in the pathway amino-acid degradation; L-kynurenine degradation; L-alanine and anthranilate from L-kynurenine: step 1/1. It participates in cofactor biosynthesis; NAD(+) biosynthesis; quinolinate from L-kynurenine: step 2/3. Its function is as follows. Catalyzes the cleavage of L-kynurenine (L-Kyn) and L-3-hydroxykynurenine (L-3OHKyn) into anthranilic acid (AA) and 3-hydroxyanthranilic acid (3-OHAA), respectively. This is Kynureninase 2 (bna5-2) from Emericella nidulans (strain FGSC A4 / ATCC 38163 / CBS 112.46 / NRRL 194 / M139) (Aspergillus nidulans).